Consider the following 340-residue polypeptide: Glycerol-3-phosphate dehydrogenase [NAD(P)+] (340 aa).

S11, W12, R33, and K106 together coordinate NADPH. Residues K106, G137, and S139 each contribute to the sn-glycerol 3-phosphate site. A141 contributes to the NADPH binding site. Residues K192, D245, S255, R256, and N257 each coordinate sn-glycerol 3-phosphate. Residue K192 is the Proton acceptor of the active site. An NADPH-binding site is contributed by R256. The NADPH site is built by V280 and E282.

This sequence belongs to the NAD-dependent glycerol-3-phosphate dehydrogenase family.

The protein resides in the cytoplasm. The catalysed reaction is sn-glycerol 3-phosphate + NAD(+) = dihydroxyacetone phosphate + NADH + H(+). It carries out the reaction sn-glycerol 3-phosphate + NADP(+) = dihydroxyacetone phosphate + NADPH + H(+). It participates in membrane lipid metabolism; glycerophospholipid metabolism. In terms of biological role, catalyzes the reduction of the glycolytic intermediate dihydroxyacetone phosphate (DHAP) to sn-glycerol 3-phosphate (G3P), the key precursor for phospholipid synthesis. The chain is Glycerol-3-phosphate dehydrogenase [NAD(P)+] from Bacillus mycoides (strain KBAB4) (Bacillus weihenstephanensis).